Here is a 408-residue protein sequence, read N- to C-terminus: Dual-specificity RNA methyltransferase RlmN (408 aa).

Catalysis depends on Glu120, which acts as the Proton acceptor. One can recognise a Radical SAM core domain in the interval 126 to 375; sequence EEGRGTLCIS…IRTPRGRDIL (250 aa). The cysteines at positions 133 and 378 are disulfide-linked. 3 residues coordinate [4Fe-4S] cluster: Cys140, Cys144, and Cys147. Residues 204–205, Ser236, 258–260, and Asn335 each bind S-adenosyl-L-methionine; these read GE and SLH. Catalysis depends on Cys378, which acts as the S-methylcysteine intermediate.

The protein belongs to the radical SAM superfamily. RlmN family. [4Fe-4S] cluster is required as a cofactor.

It is found in the cytoplasm. It carries out the reaction adenosine(2503) in 23S rRNA + 2 reduced [2Fe-2S]-[ferredoxin] + 2 S-adenosyl-L-methionine = 2-methyladenosine(2503) in 23S rRNA + 5'-deoxyadenosine + L-methionine + 2 oxidized [2Fe-2S]-[ferredoxin] + S-adenosyl-L-homocysteine. It catalyses the reaction adenosine(37) in tRNA + 2 reduced [2Fe-2S]-[ferredoxin] + 2 S-adenosyl-L-methionine = 2-methyladenosine(37) in tRNA + 5'-deoxyadenosine + L-methionine + 2 oxidized [2Fe-2S]-[ferredoxin] + S-adenosyl-L-homocysteine. In terms of biological role, specifically methylates position 2 of adenine 2503 in 23S rRNA and position 2 of adenine 37 in tRNAs. m2A2503 modification seems to play a crucial role in the proofreading step occurring at the peptidyl transferase center and thus would serve to optimize ribosomal fidelity. This chain is Dual-specificity RNA methyltransferase RlmN, found in Rhizobium leguminosarum bv. trifolii (strain WSM2304).